A 628-amino-acid polypeptide reads, in one-letter code: Junctophilin-4 (628 aa).

Residues 1–606 lie on the Cytoplasmic side of the membrane; the sequence is MSPGGKFDFD…RPAQPGAANP (606 aa). MORN repeat units follow at residues 50–72, 74–95, 96–117, 118–140, 141–163, and 164–186; these read LGVFTGPGGHSYQGHWQQGKREG, GVERKSRWTYRGEWLGGLKGRS, GVWESVSGLRYAGLWKDGFQDG, YGTETYSDGGTYQGQWQAGKRHG, YGVRQSVPYHQAALLRSPRRTSL, and DSGHSDPPTPPPPLPLPGDEGGS. Disordered stretches follow at residues 158–214 and 231–276; these read PRRT…RTPA and GGRR…LIEG. The span at 170-179 shows a compositional bias: pro residues; sequence PPTPPPPLPL. Low complexity-rich tracts occupy residues 231–241 and 253–272; these read GGRRSSLGSKR and GSTGPPGSEASGPPAAAPPA. MORN repeat units follow at residues 317–339 and 340–362; these read YGRTTRPDGSREEGKYKRNRLVH and GGRVRSLLPLALRRGKVKEKVDR. Residues 415–602 are disordered; that stretch reads DLQPMLEAPG…AATERPAQPG (188 aa). The segment covering 432 to 443 has biased composition (acidic residues); that stretch reads EGSDTEPLDEDS. Composition is skewed to low complexity over residues 453–467 and 528–541; these read PSEGSPELPSSPASS and GSPLLGGCSDSSGS. A helical; Anchor for type IV membrane protein transmembrane segment spans residues 607 to 628; sequence LVVGAVALLDLSLAFLFSQLLT.

The protein belongs to the junctophilin family.

The protein localises to the cell membrane. It is found in the endoplasmic reticulum membrane. Junctophilins contribute to the formation of junctional membrane complexes (JMCs) which link the plasma membrane with the endoplasmic or sarcoplasmic reticulum in excitable cells. Provides a structural foundation for functional cross-talk between the cell surface and intracellular calcium release channels. JPH4 is brain-specific and appears to have an active role in certain neurons involved in motor coordination and memory. The chain is Junctophilin-4 (JPH4) from Homo sapiens (Human).